A 511-amino-acid chain; its full sequence is Maturase K (511 aa).

The protein belongs to the intron maturase 2 family. MatK subfamily.

It localises to the plastid. The protein localises to the chloroplast. Functionally, usually encoded in the trnK tRNA gene intron. Probably assists in splicing its own and other chloroplast group II introns. The protein is Maturase K of Nardus stricta (Mat-grass).